Reading from the N-terminus, the 444-residue chain is D(2) dopamine receptor (444 aa).

Topologically, residues 1 to 37 (MDPLNLSWYDDDLERQNWSRPFNGSEGKADRPHYNYY) are extracellular. Asparagine 5, asparagine 17, and asparagine 23 each carry an N-linked (GlcNAc...) asparagine glycan. A helical membrane pass occupies residues 38–60 (AMLLTLLIFIIVFGNVLVCMAVS). Residues 61–70 (REKALQTTTN) are Cytoplasmic-facing. Residues 71–93 (YLIVSLAVADLLVATLVMPWVVY) form a helical membrane-spanning segment. The Extracellular portion of the chain corresponds to 94 to 108 (LEVVGEWKFSRIHCD). The cysteines at positions 107 and 182 are disulfide-linked. A helical membrane pass occupies residues 109–130 (IFVTLDVMMCTASILNLCAISI). Topologically, residues 131-151 (DRYTAVAMPMLYNTRYSSKRR) are cytoplasmic. The helical transmembrane segment at 152 to 172 (VTVMIAIVWVLSFTISCPLLF) threads the bilayer. Topologically, residues 173 to 188 (GLNNTDQNECIIANPA) are extracellular. Residues 189–213 (FVVYSSIVSFYVPFIVTLLVYIKIY) form a helical membrane-spanning segment. The interval 211–374 (KIYIVLRKRR…SQQKEKKATQ (164 aa)) is interaction with PPP1R9B. The Cytoplasmic portion of the chain corresponds to 214-374 (IVLRKRRKRV…SQQKEKKATQ (161 aa)). The interval 282–329 (EMLSSTSPPERTRYSPIPPSHHQLTLPDPSHHGLHSNPDSPAKPEKNG) is disordered. Residues 375-396 (MLAIVLGVFIICWLPFFITHIL) form a helical membrane-spanning segment. Topologically, residues 397–410 (NIHCDCNIPPVLYS) are extracellular. Cysteine 400 and cysteine 402 form a disulfide bridge. A helical transmembrane segment spans residues 411 to 432 (AFTWLGYVNSAVNPIIYTTFNI). The Cytoplasmic segment spans residues 433-444 (EFRKAFMKILHC). Cysteine 444 carries S-palmitoyl cysteine lipidation.

This sequence belongs to the G-protein coupled receptor 1 family. In terms of assembly, forms homo- and heterooligomers with DRD4. The interaction with DRD4 may modulate agonist-induced downstream signaling. Interacts with CADPS and CADPS2. Interacts with GPRASP1, PPP1R9B and CLIC6. Interacts with ARRB2. Interacts with HTR2A. Interacts with DRD1. Interacts with KCNA2. In terms of processing, palmitoylated. Palmitoylation which is required for proper localization to the plasma membrane and stability of the receptor could be carried on by ZDHHC4, ZDHHC3 and ZDHHC8. Expressed in the anterior lobe of the pituitary gland. Expressed ventral tegmental area of the midbrain and the pars compacta of the substantia nigra. Expressed seven times more than isoform short in the caudate nucleus. In terms of tissue distribution, expressed in the anterior lobe of the pituitary gland. Expressed in the caudate nucleus. Not expressed in the wider brain.

It is found in the cell membrane. The protein resides in the golgi apparatus membrane. Dopamine receptor whose activity is mediated by G proteins which inhibit adenylyl cyclase. Positively regulates postnatal regression of retinal hyaloid vessels via suppression of VEGFR2/KDR activity, downstream of OPN5. In Rattus norvegicus (Rat), this protein is D(2) dopamine receptor (Drd2).